Consider the following 509-residue polypeptide: MEPYVLLDPRQKALYRDVMQESYETLMSIAQGLVNHKAAEEDAVGLKEDAVGSEEPQTHPPHNPAQNRTAGSHRRKAKRPDKAAPLGVAQTPPAAPTPKRDGVKPSRVRDRPFGCPDCGKSFPWASHLERHRRVHTGERPYSCPECGESYSQSSHLVQHRRTHGGDRPHKCQHCGKPFAGAAQLLAHSRGHAADRPHRCGDCGKGFVWASHLERHRRVHTGEKPYECPECGEAFSQGSHLTKHRRSHARSGRTAAPLRKCFGQSSDLVQHRSRAGKKPQRCAECGKAFRAAPPLRRHRRERSHRCGDCGKGFAWASHLQRHRRVHTGERPFPCGLCGERFSQKAHLLQHGKTHRPERPYKCGDCGKRFENAPPFLAHRRGHAALKSFTCGDCGKGFAWASHLQRHRRVHTGEKPYECPECGEAFSQGSHLTKHRRSHGPKAPLLPVQGRGEAGEPLRASPLSSGAEQRDGRRAQRGGVEEEVGWGANRAVLRGRSAHSWPRSHLPMLGC.

The KRAB domain occupies 1 to 61; the sequence is MEPYVLLDPR…GSEEPQTHPP (61 aa). 2 stretches are compositionally biased toward basic and acidic residues: residues 41-50 and 98-112; these read EDAVGLKEDA and PKRD…RDRP. Positions 41 to 114 are disordered; that stretch reads EDAVGLKEDA…PSRVRDRPFG (74 aa). C2H2-type zinc fingers lie at residues 113–135, 141–163, 169–191, 197–219, 225–247, 279–303, 303–325, 331–353, 359–383, 387–409, and 415–437; these read FGCP…RRVH, YSCP…RRTH, HKCQ…SRGH, HRCG…RRVH, YECP…RRSH, QRCA…ERSH, FPCG…GKTH, YKCG…GHAA, and FTCG…RRVH. Residues 428 to 479 are disordered; that stretch reads SHLTKHRRSHGPKAPLLPVQGRGEAGEPLRASPLSSGAEQRDGRRAQRGGVE.

Belongs to the krueppel C2H2-type zinc-finger protein family.

The protein resides in the nucleus. The protein is Zinc finger protein CKR1 of Gallus gallus (Chicken).